Here is a 166-residue protein sequence, read N- to C-terminus: S-phase kinase-associated protein 1 homolog (166 aa).

The tract at residues 105–166 is interaction with the F-box domain of F-box proteins; sequence ILAANYLDIK…ENKWAEEATS (62 aa).

Belongs to the SKP1 family. Component of multiple SCF (SKP1-CUL1-F-box) E3 ubiquitin-protein ligase complexes formed of CUL1, SKP1, RBX1 and a variable F-box domain-containing protein as substrate-specific subunit.

Its pathway is protein modification; protein ubiquitination. Its function is as follows. Essential component of the SCF (SKP1-CUL1-F-box protein) ubiquitin ligase complex, which mediates the ubiquitination of proteins involved in cell cycle progression, signal transduction and transcription. In the SCF complex, serves as an adapter that links the F-box protein to CUL1. The functional specificity of the SCF complex depends on the F-box protein as substrate recognition component. Its association with the holoenzyme telomerase ribonucleoprotein complex suggests that it may play a role in turnover of holoenzyme telomerase complex components. The sequence is that of S-phase kinase-associated protein 1 homolog from Tetrahymena thermophila (strain SB210).